The primary structure comprises 72 residues: Translation initiation factor IF-1 (72 aa).

The S1-like domain occupies 1-72 (MSKEDVIEVE…TRGRITWRAK (72 aa)).

This sequence belongs to the IF-1 family. In terms of assembly, component of the 30S ribosomal translation pre-initiation complex which assembles on the 30S ribosome in the order IF-2 and IF-3, IF-1 and N-formylmethionyl-tRNA(fMet); mRNA recruitment can occur at any time during PIC assembly.

Its subcellular location is the cytoplasm. One of the essential components for the initiation of protein synthesis. Stabilizes the binding of IF-2 and IF-3 on the 30S subunit to which N-formylmethionyl-tRNA(fMet) subsequently binds. Helps modulate mRNA selection, yielding the 30S pre-initiation complex (PIC). Upon addition of the 50S ribosomal subunit IF-1, IF-2 and IF-3 are released leaving the mature 70S translation initiation complex. The chain is Translation initiation factor IF-1 from Acetivibrio thermocellus (strain ATCC 27405 / DSM 1237 / JCM 9322 / NBRC 103400 / NCIMB 10682 / NRRL B-4536 / VPI 7372) (Clostridium thermocellum).